Consider the following 1616-residue polypeptide: Protein Shroom2 (1616 aa).

Residues 26–108 (LVEVQLSGGA…TLKLVVKRRS (83 aa)) form the PDZ domain. Disordered stretches follow at residues 128-159 (ELAA…LSSS) and 183-229 (HPSS…KADT). Positions 150-159 (SSSSHDLSSS) are enriched in low complexity. Polar residues-rich tracts occupy residues 186 to 197 (SRLSVAKSNSSI) and 220 to 229 (PDHTLSKADT). Ser-231 bears the Phosphoserine mark. Residues 247–259 (QGGRQAQAAGDPQ) are compositionally biased toward low complexity. 8 disordered regions span residues 247–475 (QGGR…SGWQ), 502–678 (GALE…PLAG), 695–790 (TSFK…SEDT), 802–869 (EETS…LPRR), 881–1100 (KEQR…PSPA), 1115–1184 (PSVF…LTDK), 1268–1302 (AEPE…PGLS), and 1363–1389 (QRRK…VPAA). Positions 312–321 (SSPPPPPPPL) are enriched in pro residues. 2 positions are modified to phosphoserine: Ser-313 and Ser-325. Positions 343–356 (AAAAQHFTALAQAQ) are enriched in low complexity. Positions 358–370 (RGDRRPELTDRPW) are enriched in basic and acidic residues. The span at 405–415 (SSRLQASLSSS) shows a compositional bias: low complexity. The residue at position 413 (Ser-413) is a Phosphoserine. Residues 684–773 (LKEAQARVLR…SEPEKMNEVG (90 aa)) form the ASD1 domain. Basic and acidic residues-rich tracts occupy residues 754 to 770 (FTAE…EKMN) and 821 to 830 (IPRDKPERPR). Over residues 842 to 854 (WSRTTSLGDSLNA) the composition is skewed to polar residues. Phosphoserine is present on residues Ser-851, Ser-897, Ser-921, Ser-922, and Ser-924. Phosphothreonine is present on Thr-925. Positions 926-958 (DHYKQEASVELRRQAGDPGEPREELPSAVRAEE) are enriched in basic and acidic residues. Ser-974 carries the phosphoserine modification. Over residues 975 to 994 (PGSQQHPPSQKAPNPPTFSE) the composition is skewed to polar residues. Residues Ser-1036 and Ser-1039 each carry the phosphoserine modification. Residues 1068 to 1077 (PKREPRRYRA) show a composition bias toward basic and acidic residues. The segment covering 1159-1176 (LRLQTATMETSRSPSPQF) has biased composition (polar residues). 3 positions are modified to phosphoserine: Ser-1171, Ser-1173, and Ser-1297. One can recognise an ASD2 domain in the interval 1317-1611 (EELAREIVGK…QLKCLLDSLQ (295 aa)).

It belongs to the shroom family. Interacts with F-actin. Abundant in retina and melanoma; also in brain, placenta, lung, kidney and pancreas.

Its subcellular location is the apical cell membrane. The protein localises to the cell junction. The protein resides in the tight junction. It is found in the cytoplasm. It localises to the cytoskeleton. Functionally, may be involved in endothelial cell morphology changes during cell spreading. In the retinal pigment epithelium, may regulate the biogenesis of melanosomes and promote their association with the apical cell surface by inducing gamma-tubulin redistribution. This Homo sapiens (Human) protein is Protein Shroom2 (SHROOM2).